The following is a 125-amino-acid chain: Transmembrane protein 14EP (125 aa).

2 consecutive transmembrane segments (helical) span residues 9-29 and 81-101; these read VPLY…GISG and ILTL…LIVS.

It belongs to the TMEM14 family.

The protein localises to the membrane. The chain is Transmembrane protein 14EP (TMEM14EP) from Homo sapiens (Human).